Here is a 465-residue protein sequence, read N- to C-terminus: ATP synthase subunit beta (465 aa).

Position 149–156 (149–156 (GGAGVGKT)) interacts with ATP.

Belongs to the ATPase alpha/beta chains family. As to quaternary structure, F-type ATPases have 2 components, CF(1) - the catalytic core - and CF(0) - the membrane proton channel. CF(1) has five subunits: alpha(3), beta(3), gamma(1), delta(1), epsilon(1). CF(0) has three main subunits: a(1), b(2) and c(9-12). The alpha and beta chains form an alternating ring which encloses part of the gamma chain. CF(1) is attached to CF(0) by a central stalk formed by the gamma and epsilon chains, while a peripheral stalk is formed by the delta and b chains.

Its subcellular location is the cell inner membrane. It catalyses the reaction ATP + H2O + 4 H(+)(in) = ADP + phosphate + 5 H(+)(out). Produces ATP from ADP in the presence of a proton gradient across the membrane. The catalytic sites are hosted primarily by the beta subunits. The protein is ATP synthase subunit beta of Dictyoglomus thermophilum (strain ATCC 35947 / DSM 3960 / H-6-12).